The sequence spans 113 residues: Ribonuclease P protein component (113 aa).

It belongs to the RnpA family. In terms of assembly, consists of a catalytic RNA component (M1 or rnpB) and a protein subunit.

The enzyme catalyses Endonucleolytic cleavage of RNA, removing 5'-extranucleotides from tRNA precursor.. In terms of biological role, RNaseP catalyzes the removal of the 5'-leader sequence from pre-tRNA to produce the mature 5'-terminus. It can also cleave other RNA substrates such as 4.5S RNA. The protein component plays an auxiliary but essential role in vivo by binding to the 5'-leader sequence and broadening the substrate specificity of the ribozyme. The protein is Ribonuclease P protein component of Clavibacter michiganensis subsp. michiganensis (strain NCPPB 382).